Here is a 520-residue protein sequence, read N- to C-terminus: Beta-2-syntrophin (520 aa).

The disordered stretch occupies residues 45-95 (EPPAAAFNGLPNGGGGESLPGSPNRGLGPPSPPAPPRGPAGEASASPPVRR). Over residues 63-72 (LPGSPNRGLG) the composition is skewed to low complexity. Positions 73–82 (PPSPPAPPRG) are enriched in pro residues. Phosphoserine is present on residues serine 75, serine 90, serine 109, serine 191, serine 202, serine 213, serine 373, and serine 375. Positions 83–93 (PAGEASASPPV) are enriched in low complexity. Residues 95-178 (RVRVVKQEAG…EVLLEVKFIR (84 aa)) form the PDZ domain. PH domains follow at residues 143–280 (ILSV…TNIM) and 305–417 (EVKH…QGCH). Residues 195–220 (WEGASPQSPSFSGSEDSGSPKHQNTT) are disordered. Residues 197-211 (GASPQSPSFSGSEDS) show a composition bias toward low complexity. An SU domain is found at 464 to 520 (PFERLKMSADDGIRNLYLDFGGPEGELTMDLHSCPKPIVFVLHTFLSAKVTRMGLLV). The interval 498–520 (PKPIVFVLHTFLSAKVTRMGLLV) is calmodulin-binding.

Belongs to the syntrophin family. In terms of assembly, monomer and homodimer. Interacts with the dystrophin protein DMD and related protein DTNA; and with the other members of the syntrophin family: SNTA1 and SNTB1. Interacts with the neuroregulin receptor ERBB4. Interacts with PTPRN when phosphorylated, protecting PTPRN from protein cleavage by CAPN1. Dephosphorylation upon insulin stimulation disrupts the interaction with PTPRN and results in the cleavage of PTPRN. Interacts with the sodium channel proteins SCN4A and SCN5A. Interacts with SAST, MAST205, microtubules and microtubule-associated proteins. Interacts with the dystrophin related protein UTRN. Interacts with DTNB. Post-translationally, phosphorylated. Partially dephosphorylated upon insulin stimulation. In terms of tissue distribution, ubiquitous. Expressed at high levels in the testis.

It is found in the membrane. Its subcellular location is the cytoplasmic vesicle. The protein resides in the secretory vesicle membrane. The protein localises to the cell junction. It localises to the cytoplasm. It is found in the cytoskeleton. Its function is as follows. Adapter protein that binds to and probably organizes the subcellular localization of a variety of membrane proteins. May link various receptors to the actin cytoskeleton and the dystrophin glycoprotein complex. May play a role in the regulation of secretory granules via its interaction with PTPRN. This is Beta-2-syntrophin (Sntb2) from Mus musculus (Mouse).